The following is a 231-amino-acid chain: Antiholin-like protein LrgB (231 aa).

A run of 5 helical transmembrane segments spans residues 7-24, 34-56, 91-113, 149-171, and 207-229; these read PYFG…GTFL, FTPL…FSYA, WWQI…YLLA, ITAF…FLKV, and ASIA…VQLI.

It belongs to the CidB/LrgB family. LrgB subfamily.

It localises to the cell membrane. In terms of biological role, inhibits the expression or activity of extracellular murein hydrolases by interacting, possibly with LrgA, with the holin-like protein CidA. The LrgAB and CidA proteins may affect the proton motive force of the membrane. May be involved in programmed cell death (PCD), possibly triggering PCD in response to antibiotics and environmental stresses. The polypeptide is Antiholin-like protein LrgB (Bacillus subtilis (strain 168)).